A 699-amino-acid chain; its full sequence is Auxin response factor 1 (699 aa).

Residues 122–224 (FCKILTPSDT…EQRVGVRRLV (103 aa)) constitute a DNA-binding region (TF-B3). 2 disordered regions span residues 539–565 (TTTD…DSGQ) and 680–699 (EPHP…KTGF). In terms of domain architecture, PB1 spans 595–684 (RTRIKVQMHG…DEKKIEPHPK (90 aa)). Residues 687-699 (SSANPEQDQKTGF) show a composition bias toward polar residues.

This sequence belongs to the ARF family. In terms of assembly, homodimers and heterodimers. As to expression, expressed in roots, culms, leaves and young panicles.

Its subcellular location is the nucleus. Functionally, auxin response factors (ARFs) are transcriptional factors that bind specifically to the DNA sequence 5'-TGTCTC-3' found in the auxin-responsive promoter elements (AuxREs). The protein is Auxin response factor 1 (ARF1) of Oryza sativa subsp. japonica (Rice).